Reading from the N-terminus, the 141-residue chain is Guanyl-specific ribonuclease Sa3 (141 aa).

A signal peptide (or 43) is located at residues 1–36; that stretch reads MRIPPRLVALAGAAAVAATLIAGPVAAAAPASHAVA. A disulfide bridge links Cys-52 with Cys-141. The Proton acceptor role is filled by Glu-99. His-130 serves as the catalytic Proton donor.

The protein belongs to the ribonuclease N1/T1 family.

The protein resides in the secreted. The catalysed reaction is [RNA] containing guanosine + H2O = an [RNA fragment]-3'-guanosine-3'-phosphate + a 5'-hydroxy-ribonucleotide-3'-[RNA fragment].. The polypeptide is Guanyl-specific ribonuclease Sa3 (rnaSA3) (Kitasatospora aureofaciens (Streptomyces aureofaciens)).